Reading from the N-terminus, the 192-residue chain is Large ribosomal subunit protein uL6 (192 aa).

The protein belongs to the universal ribosomal protein uL6 family. In terms of assembly, part of the 50S ribosomal subunit.

Its function is as follows. This protein binds to the 23S rRNA, and is important in its secondary structure. It is located near the subunit interface in the base of the L7/L12 stalk, and near the tRNA binding site of the peptidyltransferase center. This Nanoarchaeum equitans (strain Kin4-M) protein is Large ribosomal subunit protein uL6.